Reading from the N-terminus, the 447-residue chain is Tubulin beta-1 chain (447 aa).

GTP contacts are provided by glutamine 11, glutamate 69, serine 138, glycine 142, threonine 143, glycine 144, asparagine 204, and asparagine 226. Glutamate 69 lines the Mg(2+) pocket.

It belongs to the tubulin family. Dimer of alpha and beta chains. A typical microtubule is a hollow water-filled tube with an outer diameter of 25 nm and an inner diameter of 15 nM. Alpha-beta heterodimers associate head-to-tail to form protofilaments running lengthwise along the microtubule wall with the beta-tubulin subunit facing the microtubule plus end conferring a structural polarity. Microtubules usually have 13 protofilaments but different protofilament numbers can be found in some organisms and specialized cells. Mg(2+) serves as cofactor.

The protein localises to the cytoplasm. Its subcellular location is the cytoskeleton. In terms of biological role, tubulin is the major constituent of microtubules, a cylinder consisting of laterally associated linear protofilaments composed of alpha- and beta-tubulin heterodimers. Microtubules grow by the addition of GTP-tubulin dimers to the microtubule end, where a stabilizing cap forms. Below the cap, tubulin dimers are in GDP-bound state, owing to GTPase activity of alpha-tubulin. This chain is Tubulin beta-1 chain, found in Geotrichum candidum (Oospora lactis).